Here is a 180-residue protein sequence, read N- to C-terminus: Ribonuclease M5 (180 aa).

Positions 5–90 (KQIIIVEGKT…NAFIKKDDIS (86 aa)) constitute a Toprim domain. 3 residues coordinate Mg(2+): glutamate 11, aspartate 59, and aspartate 61.

The protein belongs to the ribonuclease M5 family. The cofactor is Mg(2+).

It is found in the cytoplasm. The enzyme catalyses Endonucleolytic cleavage of RNA, removing 21 and 42 nucleotides, respectively, from the 5'- and 3'-termini of a 5S-rRNA precursor.. Its function is as follows. Required for correct processing of both the 5' and 3' ends of 5S rRNA precursor. Cleaves both sides of a double-stranded region yielding mature 5S rRNA in one step. In Mycoplasma capricolum subsp. capricolum (strain California kid / ATCC 27343 / NCTC 10154), this protein is Ribonuclease M5.